The sequence spans 344 residues: Ferrochelatase (344 aa).

2 residues coordinate Fe cation: His214 and Glu295.

This sequence belongs to the ferrochelatase family.

The protein resides in the cytoplasm. It carries out the reaction heme b + 2 H(+) = protoporphyrin IX + Fe(2+). It participates in porphyrin-containing compound metabolism; protoheme biosynthesis; protoheme from protoporphyrin-IX: step 1/1. In terms of biological role, catalyzes the ferrous insertion into protoporphyrin IX. This is Ferrochelatase from Rhizobium leguminosarum bv. trifolii (strain WSM2304).